We begin with the raw amino-acid sequence, 479 residues long: Sulfate adenylyltransferase subunit 1 (479 aa).

One can recognise a tr-type G domain in the interval 22–238; it reads KDMLRFLTCG…DSMDISKEPK (217 aa). Residues 31–38 form a G1 region; the sequence is GSVDDGKS. 31-38 provides a ligand contact to GTP; sequence GSVDDGKS. The interval 89–93 is G2; it reads GITID. The segment at 110–113 is G3; that stretch reads DTPG. GTP contacts are provided by residues 110 to 114 and 165 to 168; these read DTPGH and NKMD. The segment at 165-168 is G4; that stretch reads NKMD. Residues 202 to 204 are G5; it reads SAL.

This sequence belongs to the TRAFAC class translation factor GTPase superfamily. Classic translation factor GTPase family. CysN/NodQ subfamily. In terms of assembly, heterodimer composed of CysD, the smaller subunit, and CysN.

The enzyme catalyses sulfate + ATP + H(+) = adenosine 5'-phosphosulfate + diphosphate. It functions in the pathway sulfur metabolism; hydrogen sulfide biosynthesis; sulfite from sulfate: step 1/3. Its function is as follows. With CysD forms the ATP sulfurylase (ATPS) that catalyzes the adenylation of sulfate producing adenosine 5'-phosphosulfate (APS) and diphosphate, the first enzymatic step in sulfur assimilation pathway. APS synthesis involves the formation of a high-energy phosphoric-sulfuric acid anhydride bond driven by GTP hydrolysis by CysN coupled to ATP hydrolysis by CysD. This Sulfurovum sp. (strain NBC37-1) protein is Sulfate adenylyltransferase subunit 1.